Consider the following 574-residue polypeptide: Septation ring formation regulator EzrA (574 aa).

Over 1 to 7 (MSSGIIL) the chain is Extracellular. A helical membrane pass occupies residues 8–26 (LIVAIVLLVIIAYLVGVII). The Cytoplasmic segment spans residues 27–574 (RKRNDSLITS…YEKTREHIRF (548 aa)). 3 coiled-coil regions span residues 102–141 (NFIR…EEKN), 274–350 (ELVT…ETES), and 459–520 (QLEA…SFEA).

The protein belongs to the EzrA family.

The protein resides in the cell membrane. In terms of biological role, negative regulator of FtsZ ring formation; modulates the frequency and position of FtsZ ring formation. Inhibits FtsZ ring formation at polar sites. Interacts either with FtsZ or with one of its binding partners to promote depolymerization. This Streptococcus pyogenes serotype M6 (strain ATCC BAA-946 / MGAS10394) protein is Septation ring formation regulator EzrA.